We begin with the raw amino-acid sequence, 187 residues long: UPF0340 protein SGO_0411 (187 aa).

The protein belongs to the UPF0340 family.

This chain is UPF0340 protein SGO_0411, found in Streptococcus gordonii (strain Challis / ATCC 35105 / BCRC 15272 / CH1 / DL1 / V288).